The following is a 96-amino-acid chain: UPF0235 protein VC_0458 (96 aa).

The protein belongs to the UPF0235 family.

The sequence is that of UPF0235 protein VC_0458 from Vibrio cholerae serotype O1 (strain ATCC 39315 / El Tor Inaba N16961).